Consider the following 297-residue polypeptide: Bifunctional protein FolD 1 (297 aa).

Residues 174 to 176 (GRS), S199, and I240 each bind NADP(+).

Belongs to the tetrahydrofolate dehydrogenase/cyclohydrolase family. Homodimer.

The catalysed reaction is (6R)-5,10-methylene-5,6,7,8-tetrahydrofolate + NADP(+) = (6R)-5,10-methenyltetrahydrofolate + NADPH. It carries out the reaction (6R)-5,10-methenyltetrahydrofolate + H2O = (6R)-10-formyltetrahydrofolate + H(+). It functions in the pathway one-carbon metabolism; tetrahydrofolate interconversion. Its function is as follows. Catalyzes the oxidation of 5,10-methylenetetrahydrofolate to 5,10-methenyltetrahydrofolate and then the hydrolysis of 5,10-methenyltetrahydrofolate to 10-formyltetrahydrofolate. This is Bifunctional protein FolD 1 from Acinetobacter baylyi (strain ATCC 33305 / BD413 / ADP1).